A 522-amino-acid polypeptide reads, in one-letter code: 5,6-dihydroxyindole-2-carboxylic acid oxidase (522 aa).

A signal peptide spans 1 to 21; the sequence is MLRTSCGGMLLLVHALGLVRA. Topologically, residues 22–470 are lumenal, melanosome; sequence QFPRACVTPE…RPLTPTQIVT (449 aa). 5 disulfide bridges follow: cysteine 27–cysteine 38, cysteine 39–cysteine 59, cysteine 50–cysteine 89, cysteine 91–cysteine 100, and cysteine 103–cysteine 112. Asparagine 164 and asparagine 171 each carry an N-linked (GlcNAc...) asparagine glycan. Residues histidine 182, histidine 205, and histidine 214 each coordinate Zn(2+). Intrachain disulfides connect cysteine 248–cysteine 251 and cysteine 280–cysteine 293. Asparagine 294 is a glycosylation site (N-linked (GlcNAc...) asparagine). Histidine 367 and histidine 371 together coordinate Zn(2+). N-linked (GlcNAc...) asparagine glycosylation occurs at asparagine 375. Histidine 394 lines the Zn(2+) pocket. A helical transmembrane segment spans residues 471-491; sequence VAVVAALLLVAIIFAASTCVV. Residues 492–522 are Cytoplasmic-facing; sequence HLRGNRTEGRQPLLGDQYQRYEDHNKTQSVV.

This sequence belongs to the tyrosinase family. Cu(2+) serves as cofactor. Zn(2+) is required as a cofactor.

The protein resides in the melanosome membrane. It catalyses the reaction 2 5,6-dihydroxyindole-2-carboxylate + O2 = 2 indole-5,6-quinone-2-carboxylate + 2 H2O. It participates in pigment biosynthesis; melanin biosynthesis. Functionally, plays a role in melanin biosynthesis. Catalyzes the oxidation of 5,6-dihydroxyindole-2-carboxylic acid (DHICA) into indole-5,6-quinone-2-carboxylic acid. May regulate or influence the type of melanin synthesized. Also to a lower extent, capable of hydroxylating tyrosine and producing melanin. The chain is 5,6-dihydroxyindole-2-carboxylic acid oxidase (tyrp1) from Carassius auratus (Goldfish).